We begin with the raw amino-acid sequence, 577 residues long: Arginine--tRNA ligase (577 aa).

Residues P122–H132 carry the 'HIGH' region motif.

This sequence belongs to the class-I aminoacyl-tRNA synthetase family. As to quaternary structure, monomer.

It is found in the cytoplasm. The enzyme catalyses tRNA(Arg) + L-arginine + ATP = L-arginyl-tRNA(Arg) + AMP + diphosphate. The sequence is that of Arginine--tRNA ligase from Salmonella arizonae (strain ATCC BAA-731 / CDC346-86 / RSK2980).